We begin with the raw amino-acid sequence, 251 residues long: 3-deoxy-manno-octulosonate cytidylyltransferase (251 aa).

This sequence belongs to the KdsB family.

The protein resides in the cytoplasm. The catalysed reaction is 3-deoxy-alpha-D-manno-oct-2-ulosonate + CTP = CMP-3-deoxy-beta-D-manno-octulosonate + diphosphate. Its pathway is nucleotide-sugar biosynthesis; CMP-3-deoxy-D-manno-octulosonate biosynthesis; CMP-3-deoxy-D-manno-octulosonate from 3-deoxy-D-manno-octulosonate and CTP: step 1/1. It participates in bacterial outer membrane biogenesis; lipopolysaccharide biosynthesis. Functionally, activates KDO (a required 8-carbon sugar) for incorporation into bacterial lipopolysaccharide in Gram-negative bacteria. This chain is 3-deoxy-manno-octulosonate cytidylyltransferase, found in Parabacteroides distasonis (strain ATCC 8503 / DSM 20701 / CIP 104284 / JCM 5825 / NCTC 11152).